Here is a 64-residue protein sequence, read N- to C-terminus: Large ribosomal subunit protein uL30 (64 aa).

This sequence belongs to the universal ribosomal protein uL30 family. In terms of assembly, part of the 50S ribosomal subunit.

This Methylorubrum extorquens (strain CM4 / NCIMB 13688) (Methylobacterium extorquens) protein is Large ribosomal subunit protein uL30.